The following is a 305-amino-acid chain: tRNA pseudouridine synthase B (305 aa).

The active-site Nucleophile is the aspartate 48.

The protein belongs to the pseudouridine synthase TruB family. Type 1 subfamily.

It catalyses the reaction uridine(55) in tRNA = pseudouridine(55) in tRNA. Its function is as follows. Responsible for synthesis of pseudouridine from uracil-55 in the psi GC loop of transfer RNAs. This is tRNA pseudouridine synthase B from Pseudomonas putida (strain GB-1).